A 202-amino-acid polypeptide reads, in one-letter code: Urease accessory protein UreG (202 aa).

A GTP-binding site is contributed by 11–18; the sequence is GPVGSGKT.

Belongs to the SIMIBI class G3E GTPase family. UreG subfamily. In terms of assembly, homodimer. UreD, UreF and UreG form a complex that acts as a GTP-hydrolysis-dependent molecular chaperone, activating the urease apoprotein by helping to assemble the nickel containing metallocenter of UreC. The UreE protein probably delivers the nickel.

The protein resides in the cytoplasm. Facilitates the functional incorporation of the urease nickel metallocenter. This process requires GTP hydrolysis, probably effectuated by UreG. The chain is Urease accessory protein UreG from Prochlorococcus marinus (strain MIT 9313).